The following is a 264-amino-acid chain: Thymidylate synthase (264 aa).

A dUMP-binding site is contributed by Arg-21. (6R)-5,10-methylene-5,6,7,8-tetrahydrofolate is bound at residue His-51. DUMP is bound at residue 126–127 (RR). Residue Cys-146 is the Nucleophile of the active site. Residues 166 to 169 (RSAD), Asn-177, and 207 to 209 (HLY) each bind dUMP. Asp-169 contacts (6R)-5,10-methylene-5,6,7,8-tetrahydrofolate. Ala-263 contacts (6R)-5,10-methylene-5,6,7,8-tetrahydrofolate.

This sequence belongs to the thymidylate synthase family. Bacterial-type ThyA subfamily. Homodimer.

It is found in the cytoplasm. The catalysed reaction is dUMP + (6R)-5,10-methylene-5,6,7,8-tetrahydrofolate = 7,8-dihydrofolate + dTMP. Its pathway is pyrimidine metabolism; dTTP biosynthesis. In terms of biological role, catalyzes the reductive methylation of 2'-deoxyuridine-5'-monophosphate (dUMP) to 2'-deoxythymidine-5'-monophosphate (dTMP) while utilizing 5,10-methylenetetrahydrofolate (mTHF) as the methyl donor and reductant in the reaction, yielding dihydrofolate (DHF) as a by-product. This enzymatic reaction provides an intracellular de novo source of dTMP, an essential precursor for DNA biosynthesis. The sequence is that of Thymidylate synthase from Rhizobium johnstonii (strain DSM 114642 / LMG 32736 / 3841) (Rhizobium leguminosarum bv. viciae).